The sequence spans 440 residues: Chromosomal replication initiator protein DnaA (440 aa).

The interval 1-74 is domain I, interacts with DnaA modulators; the sequence is MNPSQILENL…VQSGNKAIIN (74 aa). Residues 74 to 99 form a domain II region; the sequence is NIQAQSAKQSNKSTKIDIAHIKAQST. The domain III, AAA+ region stretch occupies residues 100-316; it reads ILNPSFTFDS…GIIISLNAYA (217 aa). ATP is bound by residues Gly146, Gly148, Lys149, and Thr150. The domain IV, binds dsDNA stretch occupies residues 317–440; the sequence is TILGQEITLE…KNKILVKSQS (124 aa).

This sequence belongs to the DnaA family. In terms of assembly, oligomerizes as a right-handed, spiral filament on DNA at oriC.

It localises to the cytoplasm. In terms of biological role, plays an essential role in the initiation and regulation of chromosomal replication. ATP-DnaA binds to the origin of replication (oriC) to initiate formation of the DNA replication initiation complex once per cell cycle. Binds the DnaA box (a 9 base pair repeat at the origin) and separates the double-stranded (ds)DNA. Forms a right-handed helical filament on oriC DNA; dsDNA binds to the exterior of the filament while single-stranded (ss)DNA is stabiized in the filament's interior. The ATP-DnaA-oriC complex binds and stabilizes one strand of the AT-rich DNA unwinding element (DUE), permitting loading of DNA polymerase. After initiation quickly degrades to an ADP-DnaA complex that is not apt for DNA replication. Binds acidic phospholipids. The sequence is that of Chromosomal replication initiator protein DnaA from Campylobacter jejuni subsp. jejuni serotype O:23/36 (strain 81-176).